The sequence spans 345 residues: L-threonine 3-dehydrogenase (345 aa).

A Zn(2+)-binding site is contributed by Cys42. Active-site charge relay system residues include Thr44 and His47. Positions 67, 68, 97, 100, 103, and 111 each coordinate Zn(2+). NAD(+) is bound by residues Ile179, Asp199, Arg204, 266-268 (LGI), and 290-291 (IY).

This sequence belongs to the zinc-containing alcohol dehydrogenase family. Homotetramer. Zn(2+) is required as a cofactor.

It localises to the cytoplasm. The catalysed reaction is L-threonine + NAD(+) = (2S)-2-amino-3-oxobutanoate + NADH + H(+). The protein operates within amino-acid degradation; L-threonine degradation via oxydo-reductase pathway; glycine from L-threonine: step 1/2. In terms of biological role, catalyzes the NAD(+)-dependent oxidation of L-threonine to 2-amino-3-ketobutyrate. This Rhizobium etli (strain CIAT 652) protein is L-threonine 3-dehydrogenase.